Reading from the N-terminus, the 207-residue chain is Large ribosomal subunit protein uL4 (207 aa).

The interval 49 to 78 is disordered; sequence HAVKNRSAVSGGGRKPWRQKGTGRARQGSI.

It belongs to the universal ribosomal protein uL4 family. As to quaternary structure, part of the 50S ribosomal subunit.

One of the primary rRNA binding proteins, this protein initially binds near the 5'-end of the 23S rRNA. It is important during the early stages of 50S assembly. It makes multiple contacts with different domains of the 23S rRNA in the assembled 50S subunit and ribosome. Functionally, forms part of the polypeptide exit tunnel. In Streptococcus pyogenes serotype M1, this protein is Large ribosomal subunit protein uL4 (rplD).